The following is a 203-amino-acid chain: 2-phospho-L-lactate guanylyltransferase (203 aa).

It belongs to the CofC family. Homodimer.

The catalysed reaction is (2S)-2-phospholactate + GTP + H(+) = (2S)-lactyl-2-diphospho-5'-guanosine + diphosphate. The protein operates within cofactor biosynthesis; coenzyme F420 biosynthesis. Guanylyltransferase that catalyzes the activation of (2S)-2-phospholactate (2-PL) as (2S)-lactyl-2-diphospho-5'-guanosine, via the condensation of 2-PL with GTP. It is involved in the biosynthesis of coenzyme F420, a hydride carrier cofactor. The sequence is that of 2-phospho-L-lactate guanylyltransferase from Halomicrobium mukohataei (strain ATCC 700874 / DSM 12286 / JCM 9738 / NCIMB 13541) (Haloarcula mukohataei).